We begin with the raw amino-acid sequence, 644 residues long: Threonine--tRNA ligase (644 aa).

Residues 1–62 (MSFSVTLPDG…DSDVEIAIIT (62 aa)) form the TGS domain. The tract at residues 240–538 (DHRTIGRDLD…LTEIYKGAFP (299 aa)) is catalytic. Zn(2+) contacts are provided by Cys-334, His-385, and His-515.

The protein belongs to the class-II aminoacyl-tRNA synthetase family. As to quaternary structure, homodimer. Requires Zn(2+) as cofactor.

Its subcellular location is the cytoplasm. The catalysed reaction is tRNA(Thr) + L-threonine + ATP = L-threonyl-tRNA(Thr) + AMP + diphosphate + H(+). Its function is as follows. Catalyzes the attachment of threonine to tRNA(Thr) in a two-step reaction: L-threonine is first activated by ATP to form Thr-AMP and then transferred to the acceptor end of tRNA(Thr). Also edits incorrectly charged L-seryl-tRNA(Thr). The protein is Threonine--tRNA ligase of Lactobacillus acidophilus (strain ATCC 700396 / NCK56 / N2 / NCFM).